Here is a 172-residue protein sequence, read N- to C-terminus: Adenine phosphoribosyltransferase (172 aa).

The protein belongs to the purine/pyrimidine phosphoribosyltransferase family. Homodimer.

The protein localises to the cytoplasm. The enzyme catalyses AMP + diphosphate = 5-phospho-alpha-D-ribose 1-diphosphate + adenine. The protein operates within purine metabolism; AMP biosynthesis via salvage pathway; AMP from adenine: step 1/1. In terms of biological role, catalyzes a salvage reaction resulting in the formation of AMP, that is energically less costly than de novo synthesis. The polypeptide is Adenine phosphoribosyltransferase (Clostridium botulinum (strain Alaska E43 / Type E3)).